The sequence spans 433 residues: Leucine-rich repeat extensin-like protein 7 (433 aa).

The first 21 residues, 1-21, serve as a signal peptide directing secretion; it reads MRIYQPTLLIFTTVVLLSISA. The N-linked (GlcNAc...) asparagine glycan is linked to N71. LRR repeat units follow at residues 98–122, 123–145, 146–170, 171–194, 196–217, 219–239, 241–265, 266–289, and 290–313; these read VKTV…LGLL, TDIA…GFSQ, LSLL…VIGL, PKLK…LFDK, LDAL…MGNS, VSVL…SFGK, GKTL…MGLL, QNVT…MGQM, and ENLE…LCSL. N267 is a glycosylation site (N-linked (GlcNAc...) asparagine). The N-linked (GlcNAc...) asparagine glycan is linked to N340. The interval 380–433 is disordered; it reads FSPPPSQISPSSQPLAPAPSPTSPPLSTPPPARPCPPVYSPPPPPPLSLAPSMN. Residues 381–433 form a contains the Ser-Pro(4) repeats region; the sequence is SPPPSQISPSSQPLAPAPSPTSPPLSTPPPARPCPPVYSPPPPPPLSLAPSMN. A compositionally biased stretch (pro residues) spans 395 to 427; the sequence is APAPSPTSPPLSTPPPARPCPPVYSPPPPPPLS.

In terms of processing, hydroxylated on proline residues in the S-P-P-P-P repeat. Post-translationally, O-glycosylated on hydroxyprolines. In terms of tissue distribution, expressed in flowers and pollen.

Its subcellular location is the secreted. It localises to the cell wall. In terms of biological role, modulates cell morphogenesis by regulating cell wall formation and assembly, and/or growth polarization. The protein is Leucine-rich repeat extensin-like protein 7 (LRX7) of Arabidopsis thaliana (Mouse-ear cress).